Reading from the N-terminus, the 409-residue chain is Argininosuccinate synthase (409 aa).

ATP-binding positions include A15–S23 and A42. L-citrulline is bound by residues Y93 and S98. G123 is a binding site for ATP. Residues T125, N129, and D130 each coordinate L-aspartate. An L-citrulline-binding site is contributed by N129. R133, S182, S191, E267, and Y279 together coordinate L-citrulline.

This sequence belongs to the argininosuccinate synthase family. Type 1 subfamily. Homotetramer.

It localises to the cytoplasm. It carries out the reaction L-citrulline + L-aspartate + ATP = 2-(N(omega)-L-arginino)succinate + AMP + diphosphate + H(+). It participates in amino-acid biosynthesis; L-arginine biosynthesis; L-arginine from L-ornithine and carbamoyl phosphate: step 2/3. The chain is Argininosuccinate synthase from Desulfitobacterium hafniense (strain Y51).